Here is a 239-residue protein sequence, read N- to C-terminus: Tetraspanin-9 (239 aa).

Topologically, residues 1 to 13 are cytoplasmic; sequence MARGCLCCLKYTM. Residues 14 to 34 form a helical membrane-spanning segment; it reads FLFNLIFWLCGCGLLGVGIWL. Residues 35 to 55 are Extracellular-facing; the sequence is SVSQGNFATFSPSFPSLSAAN. A helical membrane pass occupies residues 56 to 76; it reads LVIAIGTIVMVTGFLGCLGAI. At 77–85 the chain is on the cytoplasmic side; it reads KENKCLLLS. A helical membrane pass occupies residues 86–106; the sequence is FFIVLLIILLAELILIILFFV. Residues 107 to 203 lie on the Extracellular side of the membrane; that stretch reads YMDKVNENAK…VKLWFDDNKH (97 aa). A glycan (N-linked (GlcNAc...) asparagine) is linked at N180. The helical transmembrane segment at 204–224 threads the bilayer; the sequence is VLGTVGMCILIMQILGMAFSM. Over 225-239 the chain is Cytoplasmic; that stretch reads TLFQHIHRTGKKYDA.

This sequence belongs to the tetraspanin (TM4SF) family. As to quaternary structure, found in a complex with GP6. In terms of processing, glycosylated. In terms of tissue distribution, strongly expressed in megakaryocytes, platelets and lung. Weakly expressed in bone marrow, brain and kidney (at protein level).

Its subcellular location is the membrane. This Mus musculus (Mouse) protein is Tetraspanin-9 (Tspan9).